Reading from the N-terminus, the 49-residue chain is Omega-segestritoxin-Sf1a (49 aa).

4 disulfides stabilise this stretch: C3-C22, C10-C27, C21-C48, and C29-C46.

Expressed by the venom gland.

It is found in the secreted. Functionally, potent and selective blocker of N-type voltage-gated calcium channels (Cav2.2/CACNA1B). Also blocks vertebrate Cav2.1/CACNA1A (P/Q-type) and Cav1.2/CACNA1C (L-type) channels at very high concentration (2 micromolar). In Segestria florentina (Tube-web spider), this protein is Omega-segestritoxin-Sf1a.